The chain runs to 106 residues: Ig kappa-b4 chain C region (106 aa).

The 94-residue stretch at 6–99 (PSVLLFPPSK…VQGSASPIVQ (94 aa)) folds into the Ig-like domain. Cys-27 and Cys-87 are disulfide-bonded. Residues 48-64 (QQSGIENSKTPQSPEDN) show a composition bias toward polar residues. Positions 48–67 (QQSGIENSKTPQSPEDNTYS) are disordered.

The polypeptide is Ig kappa-b4 chain C region (K-BAS) (Oryctolagus cuniculus (Rabbit)).